A 72-amino-acid polypeptide reads, in one-letter code: Prokaryotic ubiquitin-like protein Pup (72 aa).

The span at 1–10 (MATKDTGGGQ) shows a compositional bias: gly residues. The disordered stretch occupies residues 1–45 (MATKDTGGGQQKATRSTEEVEEQAQDAQASEDLAERQEKLSDDVD). Positions 10 to 60 (QQKATRSTEEVEEQAQDAQASEDLAERQEKLSDDVDSVLDEIDDVLEENAE) form a coiled coil. The segment at 28 to 66 (QASEDLAERQEKLSDDVDSVLDEIDDVLEENAEDFVRSF) is ARC ATPase binding. Residues 33 to 42 (LAERQEKLSD) are compositionally biased toward basic and acidic residues. Deamidated glutamine is present on glutamine 72. Glutamine 72 is covalently cross-linked (Isoglutamyl lysine isopeptide (Gln-Lys) (interchain with K-? in acceptor proteins)).

This sequence belongs to the prokaryotic ubiquitin-like protein family. In terms of assembly, strongly interacts with the proteasome-associated ATPase ARC through a hydrophobic interface; the interacting region of Pup lies in its C-terminal half. There is one Pup binding site per ARC hexamer ring. Post-translationally, is modified by deamidation of its C-terminal glutamine to glutamate by the deamidase Dop, a prerequisite to the subsequent pupylation process.

It participates in protein degradation; proteasomal Pup-dependent pathway. Its function is as follows. Protein modifier that is covalently attached to lysine residues of substrate proteins, thereby targeting them for proteasomal degradation. The tagging system is termed pupylation. The sequence is that of Prokaryotic ubiquitin-like protein Pup from Streptomyces griseus subsp. griseus (strain JCM 4626 / CBS 651.72 / NBRC 13350 / KCC S-0626 / ISP 5235).